The sequence spans 437 residues: Protein translocase subunit SecY (437 aa).

A run of 10 helical transmembrane segments spans residues 19–39 (LFTL…IPGV), 69–89 (LLQI…SIIL), 122–142 (VALA…APLF), 157–177 (IFTT…VMWL), 189–209 (GMSI…LWAI), 219–239 (WIEF…VVFV), 276–296 (VIPV…AQFA), 316–336 (PIYI…YVAI), 378–398 (GSLY…GFGA), and 400–420 (QNFP…LETV).

The protein belongs to the SecY/SEC61-alpha family. As to quaternary structure, component of the Sec protein translocase complex. Heterotrimer consisting of SecY, SecE and SecG subunits. The heterotrimers can form oligomers, although 1 heterotrimer is thought to be able to translocate proteins. Interacts with the ribosome. Interacts with SecDF, and other proteins may be involved. Interacts with SecA.

The protein localises to the cell membrane. The central subunit of the protein translocation channel SecYEG. Consists of two halves formed by TMs 1-5 and 6-10. These two domains form a lateral gate at the front which open onto the bilayer between TMs 2 and 7, and are clamped together by SecE at the back. The channel is closed by both a pore ring composed of hydrophobic SecY resides and a short helix (helix 2A) on the extracellular side of the membrane which forms a plug. The plug probably moves laterally to allow the channel to open. The ring and the pore may move independently. The sequence is that of Protein translocase subunit SecY from Streptomyces galbus.